The sequence spans 179 residues: MDLLATGRIRGTFGIEGFVKVESFSGEYEHFLGFDRVFLSILKEKLREQKYKDGWFEIEEVNLRKADALVKFKGIDNPEAAKCLTGSELFIPRDKAAPLDEGEVYVHDLCNCNLVCEGTLVGKITSVAEGGGGYLLEIAGKTSEAAAESSFYVPFNKEFIGKIDLKAKTVELMHRWILE.

One can recognise a PRC barrel domain in the interval 101–179 (EGEVYVHDLC…VELMHRWILE (79 aa)).

The protein belongs to the RimM family. Binds ribosomal protein uS19.

It localises to the cytoplasm. In terms of biological role, an accessory protein needed during the final step in the assembly of 30S ribosomal subunit, possibly for assembly of the head region. Essential for efficient processing of 16S rRNA. May be needed both before and after RbfA during the maturation of 16S rRNA. It has affinity for free ribosomal 30S subunits but not for 70S ribosomes. The chain is Ribosome maturation factor RimM from Treponema denticola (strain ATCC 35405 / DSM 14222 / CIP 103919 / JCM 8153 / KCTC 15104).